A 1756-amino-acid chain; its full sequence is RANBP2-like and GRIP domain-containing protein 2 (1756 aa).

Position 21 is a phosphoserine (S21). 3 TPR repeats span residues P59 to Q92, Q583 to I616, and E647 to W680. The segment at G759–E804 is disordered. Residues S777–P796 are compositionally biased toward low complexity. Positions H1029–D1165 constitute a RanBD1 1 domain. 2 disordered regions span residues T1206–W1241 and A1299–G1324. A compositionally biased stretch (polar residues) spans I1228–P1237. Positions T1310–R1322 are enriched in acidic residues. The region spanning Y1326–K1462 is the RanBD1 2 domain. A compositionally biased stretch (polar residues) spans N1573 to E1586. The disordered stretch occupies residues N1573–S1614. Residues S1587 to V1610 are compositionally biased toward basic and acidic residues. Residues Q1693–V1743 form the GRIP domain.

The polypeptide is RANBP2-like and GRIP domain-containing protein 2 (RGPD2) (Homo sapiens (Human)).